The primary structure comprises 426 residues: Phosphomethylpyrimidine synthase (426 aa).

Substrate-binding positions include methionine 94, tyrosine 123, histidine 162, 184–186, 225–228, and glutamate 264; these read SRG and NGMR. A Zn(2+)-binding site is contributed by histidine 268. A substrate-binding site is contributed by tyrosine 291. Histidine 332 provides a ligand contact to Zn(2+). The [4Fe-4S] cluster site is built by cysteine 406, cysteine 409, and cysteine 413.

Belongs to the ThiC family. The cofactor is [4Fe-4S] cluster.

It carries out the reaction 5-amino-1-(5-phospho-beta-D-ribosyl)imidazole + S-adenosyl-L-methionine = 4-amino-2-methyl-5-(phosphooxymethyl)pyrimidine + CO + 5'-deoxyadenosine + formate + L-methionine + 3 H(+). It participates in cofactor biosynthesis; thiamine diphosphate biosynthesis. In terms of biological role, catalyzes the synthesis of the hydroxymethylpyrimidine phosphate (HMP-P) moiety of thiamine from aminoimidazole ribotide (AIR) in a radical S-adenosyl-L-methionine (SAM)-dependent reaction. This Methanospirillum hungatei JF-1 (strain ATCC 27890 / DSM 864 / NBRC 100397 / JF-1) protein is Phosphomethylpyrimidine synthase.